The chain runs to 153 residues: Antibacterial peptide PMAP-23 (153 aa).

The first 29 residues, 1–29 (METQRASLCLGRWSLWLLLLGLVVPSASA), serve as a signal peptide directing secretion. Gln30 bears the Pyrrolidone carboxylic acid mark. Residues 30 to 130 (QALSYREAVL…DITCNQLQSV (101 aa)) constitute a propeptide that is removed on maturation. Residues 61–80 (DQPPKADEDPGTPKPVSFTV) are disordered. Disulfide bonds link Cys85–Cys96 and Cys107–Cys124.

This sequence belongs to the cathelicidin family.

The protein localises to the secreted. Its function is as follows. Exerts antimicrobial activity against both Gram-positive and negative bacteria at concentrations of 2-16 micro molar. Its activity appears to be mediated by its ability to damage bacterial membranes. This is Antibacterial peptide PMAP-23 (PMAP23) from Sus scrofa (Pig).